The chain runs to 164 residues: Transcriptional repressor NrdR (164 aa).

The segment at 3–34 (CPKCNYNKSSVVDSRQAEDGNTIRRRRECEKC) is a zinc-finger region. Residues 49–139 (LLVVKKDGTR…VYKSFKDVDE (91 aa)) enclose the ATP-cone domain.

Belongs to the NrdR family. Requires Zn(2+) as cofactor.

Functionally, negatively regulates transcription of bacterial ribonucleotide reductase nrd genes and operons by binding to NrdR-boxes. This chain is Transcriptional repressor NrdR, found in Streptococcus uberis (strain ATCC BAA-854 / 0140J).